Consider the following 317-residue polypeptide: Olfactory receptor 6P1 (317 aa).

The Extracellular portion of the chain corresponds to 1-25 (MRNLSGGHVEEFVLVGFPTTPPLQL). Asn-3 carries an N-linked (GlcNAc...) asparagine glycan. The chain crosses the membrane as a helical span at residues 26–46 (LLFVLFFAIYLLTLLENALIV). The Cytoplasmic portion of the chain corresponds to 47-54 (FTIWLAPS). The helical transmembrane segment at 55–75 (LHRPMYFFLGHLSFLELWYIN) threads the bilayer. Over 76–99 (VTIPRLLAAFLTQDGRVSYVGCMT) the chain is Extracellular. Residues Cys-97 and Cys-189 are joined by a disulfide bond. A helical membrane pass occupies residues 100-120 (QLYFFIALACTECVLLAVMAY). The Cytoplasmic segment spans residues 121–139 (DRYLAICGPLLYPSLMPSS). Residues 140 to 160 (LATRLAAASWGSGFFSSMMKL) form a helical membrane-spanning segment. The Extracellular segment spans residues 161–197 (LFISQLSYCGPNIINHFFCDISPLLNLTCSDKEQAEL). A glycan (N-linked (GlcNAc...) asparagine) is linked at Asn-186. Residues 198–217 (VDFLLALVMILLPLLAVVSS) form a helical membrane-spanning segment. Over 218 to 237 (YTAIIAAILRIPTSRGRHKA) the chain is Cytoplasmic. Residues 238 to 258 (FSTCAAHLAVVVIYYSSTLFT) traverse the membrane as a helical segment. Topologically, residues 259 to 271 (YARPRAMYTFNHN) are extracellular. The chain crosses the membrane as a helical span at residues 272–292 (KIISVLYTIIVPFFNPAIYCL). Over 293-317 (RNKEVKEAFRKTVMGRCHYPRDVQD) the chain is Cytoplasmic.

It belongs to the G-protein coupled receptor 1 family.

The protein localises to the cell membrane. Functionally, odorant receptor. In Homo sapiens (Human), this protein is Olfactory receptor 6P1 (OR6P1).